The chain runs to 2207 residues: Genome polyprotein (2207 aa).

Residue Gly2 is the site of N-myristoyl glycine; by host attachment. At 2-1518 (GAQVSSQKVG…NINRAMTILQ (1517 aa)) the chain is on the cytoplasmic side. The amphipathic alpha-helix stretch occupies residues 579–599 (GLGDLIEGVVEGVTRNALTPL). Residues 597-613 (TPLTPANNLPDTQSSGP) show a composition bias toward polar residues. 2 disordered regions span residues 597-620 (TPLT…KETP) and 628-647 (GATN…VIQK). Active-site for protease 2A activity residues include His899 and Asp917. Residues Cys934 and Cys936 each contribute to the Zn(2+) site. Cys988 (for protease 2A activity) is an active-site residue. Positions 994 and 996 each coordinate Zn(2+). Residues 1126–1198 (GDSWLKKFTE…HQSCPSQEHQ (73 aa)) form a membrane-binding region. The tract at residues 1126–1264 (GDSWLKKFTE…SPGTGKSVAT (139 aa)) is oligomerization. The RNA-binding stretch occupies residues 1147-1151 (SNKIS). The SF3 helicase domain occupies 1230–1386 (EHTINNYVQF…SEYSRDGKLN (157 aa)). 1254–1261 (GSPGTGKS) is an ATP binding site. Residues Cys1394, Cys1397, Cys1406, and Cys1411 each contribute to the Zn(2+) site. The segment at 1394-1411 (CKNCHHPANFKRCCPLVC) adopts a C4-type zinc-finger fold. The interval 1438–1445 (ERNRRSSI) is RNA-binding. The oligomerization stretch occupies residues 1449 to 1454 (MEALFQ). The stretch at 1519-1534 (AVTTFAAVAGVVYVMY) is an intramembrane region. Over 1535 to 2207 (KLFAGHQGAY…TLYRRWLDSF (673 aa)) the chain is Cytoplasmic. Tyr1544 carries the O-(5'-phospho-RNA)-tyrosine modification. Residues 1564 to 1742 (GPGFDYAVAM…FAAALKRSYF (179 aa)) enclose the Peptidase C3 domain. Catalysis depends on for protease 3C activity residues His1603, Glu1634, and Cys1710. Residues 1973 to 2088 (EKLFAFDYTG…SYPHEVDASL (116 aa)) enclose the RdRp catalytic domain. 2 residues coordinate Mg(2+): Asp1979 and Asp2074.

Belongs to the picornaviruses polyprotein family. As to quaternary structure, interacts with capsid protein VP1 and capsid protein VP3 to form heterotrimeric protomers. Interacts with capsid protein VP0, and capsid protein VP3 to form heterotrimeric protomers. Interacts with human PVR. Five protomers subsequently associate to form pentamers which serve as building blocks for the capsid. Interacts with capsid protein VP2, capsid protein VP3 and capsid protein VP4 following cleavage of capsid protein VP0. In terms of assembly, interacts with capsid protein VP1 and capsid protein VP3 in the mature capsid. As to quaternary structure, interacts with capsid protein VP0 and capsid protein VP1 to form heterotrimeric protomers. Five protomers subsequently associate to form pentamers which serve as building blocks for the capsid. Interacts with capsid protein VP4 in the mature capsid. Interacts with protein 2C; this interaction may be important for virion morphogenesis. Interacts with capsid protein VP1 and capsid protein VP3. In terms of assembly, homodimer. As to quaternary structure, homohexamer; forms a hexameric ring structure with 6-fold symmetry characteristic of AAA+ ATPases. Interacts (via N-terminus) with host RTN3 (via reticulon domain); this interaction is important for viral replication. Interacts with capsid protein VP3; this interaction may be important for virion morphogenesis. Interacts with protein 3CD. In terms of assembly, homodimer. Interacts with host GBF1. Interacts (via GOLD domain) with host ACBD3 (via GOLD domain); this interaction allows the formation of a viral protein 3A/ACBD3 heterotetramer with a 2:2 stoichiometry, which will stimulate the recruitment of host PI4KB in order to synthesize PI4P at the viral RNA replication sites. As to quaternary structure, interacts with RNA-directed RNA polymerase. Interacts with protein 3AB and with RNA-directed RNA polymerase. In terms of assembly, interacts with Viral protein genome-linked and with protein 3CD. It depends on Mg(2+) as a cofactor. Specific enzymatic cleavages in vivo by the viral proteases yield processing intermediates and the mature proteins. In terms of processing, myristoylation is required for the formation of pentamers during virus assembly. Further assembly of 12 pentamers and a molecule of genomic RNA generates the provirion. Post-translationally, during virion maturation, immature virions are rendered infectious following cleavage of VP0 into VP4 and VP2. This maturation seems to be an autocatalytic event triggered by the presence of RNA in the capsid and it is followed by a conformational change infectious virion. Myristoylation is required during RNA encapsidation and formation of the mature virus particle. In terms of processing, VPg is uridylylated by the polymerase into VPg-pUpU. This acts as a nucleotide-peptide primer for the genomic RNA replication.

It is found in the virion. It localises to the host cytoplasm. The protein localises to the host cytoplasmic vesicle membrane. The protein resides in the host nucleus. The catalysed reaction is a ribonucleoside 5'-triphosphate + H2O = a ribonucleoside 5'-diphosphate + phosphate + H(+). It carries out the reaction Selective cleavage of Tyr-|-Gly bond in the picornavirus polyprotein.. It catalyses the reaction RNA(n) + a ribonucleoside 5'-triphosphate = RNA(n+1) + diphosphate. The enzyme catalyses Selective cleavage of Gln-|-Gly bond in the poliovirus polyprotein. In other picornavirus reactions Glu may be substituted for Gln, and Ser or Thr for Gly.. Its activity is regulated as follows. Replication or transcription is subject to high level of random mutations by the nucleotide analog ribavirin. Functionally, forms an icosahedral capsid of pseudo T=3 symmetry with capsid proteins VP2 and VP3. The capsid is 300 Angstroms in diameter, composed of 60 copies of each capsid protein and enclosing the viral positive strand RNA genome. Capsid protein VP1 mainly forms the vertices of the capsid. Capsid protein VP1 interacts with host cell receptor PVR to provide virion attachment to target host cells. This attachment induces virion internalization predominantly through clathrin- and caveolin-independent endocytosis in Hela cells and through caveolin-mediated endocytosis in brain microvascular endothelial cells. Tyrosine kinases are probably involved in the entry process. Virus binding to PVR induces increased junctional permeability and rearrangement of junctional proteins. Modulation of endothelial tight junctions, as well as cytolytic infection of endothelial cells themselves, may result in loss of endothelial integrity which may help the virus to reach the CNS. After binding to its receptor, the capsid undergoes conformational changes. Capsid protein VP1 N-terminus (that contains an amphipathic alpha-helix) and capsid protein VP4 are externalized. Together, they shape a pore in the host membrane through which viral genome is translocated to host cell cytoplasm. Forms an icosahedral capsid of pseudo T=3 symmetry with capsid proteins VP2 and VP3. The capsid is 300 Angstroms in diameter, composed of 60 copies of each capsid protein and enclosing the viral positive strand RNA genome. Its function is as follows. Lies on the inner surface of the capsid shell. After binding to the host receptor, the capsid undergoes conformational changes. Capsid protein VP4 is released, Capsid protein VP1 N-terminus is externalized, and together, they shape a pore in the host membrane through which the viral genome is translocated into the host cell cytoplasm. In terms of biological role, component of immature procapsids, which is cleaved into capsid proteins VP4 and VP2 after maturation. Allows the capsid to remain inactive before the maturation step. Functionally, cysteine protease that cleaves viral polyprotein and specific host proteins. It is responsible for the autocatalytic cleavage between the P1 and P2 regions, which is the first cleavage occurring in the polyprotein. Also cleaves the host translation initiation factor EIF4G1, in order to shut down the capped cellular mRNA translation. Inhibits the host nucleus-cytoplasm protein and RNA trafficking by cleaving host members of the nuclear pores including NUP98, NUP62 and NUP153. Counteracts stress granule formation probably by antagonizing its assembly or promoting its dissassembly. Cleaves and inhibits host IFIH1/MDA5, thereby inhibiting the type-I IFN production and the establishment of the antiviral state. Cleaves and inhibits host MAVS, thereby inhibiting the type-I IFN production and the establishment of the antiviral state. Plays an essential role in the virus replication cycle by acting as a viroporin. Creates a pore in the host endoplasmic reticulum and as a consequence releases Ca2+ in the cytoplasm of infected cell. In turn, high levels of cytoplasmic calcium may trigger membrane trafficking and transport of viral ER-associated proteins to viroplasms, sites of viral genome replication. Its function is as follows. Induces and associates with structural rearrangements of intracellular membranes. Displays RNA-binding, nucleotide binding and NTPase activities. May play a role in virion morphogenesis and viral RNA encapsidation by interacting with the capsid protein VP3. In terms of biological role, localizes the viral replication complex to the surface of membranous vesicles. Together with protein 3CD binds the Cis-Active RNA Element (CRE) which is involved in RNA synthesis initiation. Acts as a cofactor to stimulate the activity of 3D polymerase, maybe through a nucleid acid chaperone activity. Functionally, localizes the viral replication complex to the surface of membranous vesicles. It inhibits host cell endoplasmic reticulum-to-Golgi apparatus transport and causes the disassembly of the Golgi complex, possibly through GBF1 interaction. This would result in depletion of MHC, trail receptors and IFN receptors at the host cell surface. Plays an essential role in viral RNA replication by recruiting ACBD3 and PI4KB at the viral replication sites, thereby allowing the formation of the rearranged membranous structures where viral replication takes place. Acts as a primer for viral RNA replication and remains covalently bound to viral genomic RNA. VPg is uridylylated prior to priming replication into VPg-pUpU. The oriI viral genomic sequence may act as a template for this. The VPg-pUpU is then used as primer on the genomic RNA poly(A) by the RNA-dependent RNA polymerase to replicate the viral genome. During genome replication, the VPg-RNA linkage is removed by the host TDP2, thereby accelerating replication. During the late stage of the replication cycle, host TDP2 is excluded from sites of viral RNA synthesis and encapsidation, allowing for the generation of progeny virions. Its function is as follows. Involved in the viral replication complex and viral polypeptide maturation. It exhibits protease activity with a specificity and catalytic efficiency that is different from protease 3C. Protein 3CD lacks polymerase activity. Protein 3CD binds to the 5'UTR of the viral genome. In terms of biological role, major viral protease that mediates proteolytic processing of the polyprotein. Cleaves host EIF5B, contributing to host translation shutoff. Also cleaves host PABPC1, contributing to host translation shutoff. Cleaves host RIGI and thus contributes to the inhibition of type I interferon production. Cleaves host NLRP1, triggers host N-glycine-mediated degradation of the autoinhibitory NLRP1 N-terminal fragment. Inhibits the integrated stress response (ISR) in the infected cell by cleaving host G3BP1. Stress granule formation is thus inhibited, which allows protein synthesis and viral replication. Functionally, replicates the viral genomic RNA on the surface of intracellular membranes. May form linear arrays of subunits that propagate along a strong head-to-tail interaction called interface-I. Covalently attaches UMP to a tyrosine of VPg, which is used to prime RNA synthesis. The positive stranded RNA genome is first replicated at virus induced membranous vesicles, creating a dsRNA genomic replication form. This dsRNA is then used as template to synthesize positive stranded RNA genomes. ss(+)RNA genomes are either translated, replicated or encapsidated. The chain is Genome polyprotein from Homo sapiens (Human).